A 424-amino-acid polypeptide reads, in one-letter code: MAIKINEKGRGKFKPAPTYEKEEVRQLLMEKINEEMEAVATATSDISNDEIQYKSDKFNVLSLFCGAGGLDLGFELAGLEQSLGTDKALEAFKDRDVYNAIRHESVFHTVYANDIFSEALQTYEKNMPNHVFIHEKDIRKIKEFPSANLVIGGFPCPGFSEAGPRLVDDERNFLYIHFIRCLMQVQPEIFVAENVKGMMTLGGGEVFRQIVEDFGAAGYRVEARLLNARDYGVPQIRERVIIVGVRNDIDFNYEYPEITHGNEEGLKPYVTLEEAIGDLSLDPGPYFTGSYSTIFMSRNRKKKWTDQSFTIQASGRQAPIHPGGLPMEKVDKNKWIFPDGEENHRRLSVKEIKRIQTFPDWYEFSDGGNMKVSVNNRLDKQYKQIGNAVPVFLARAVAKSIAQFAADYLKDNHPHEAPQMKLFI.

An SAM-dependent MTase C5-type domain is found at 58 to 408 (FNVLSLFCGA…KSIAQFAADY (351 aa)). The S-methylcysteine intermediate role is filled by C156. S-methylcysteine; by autocatalysis is present on C181.

This sequence belongs to the class I-like SAM-binding methyltransferase superfamily. C5-methyltransferase family. In terms of assembly, monomer. In terms of processing, in the absence of DNA, can self-methylate two cysteine residues.

It carries out the reaction a 2'-deoxycytidine in DNA + S-adenosyl-L-methionine = a 5-methyl-2'-deoxycytidine in DNA + S-adenosyl-L-homocysteine + H(+). A methylase, recognizes the double-stranded sequence 5'-GGCC-3', methylates C-3 on both strands, and protects the DNA from cleavage by the BspRI endonuclease. The chain is Type II methyltransferase M.BspRI (bspRIM) from Lysinibacillus sphaericus (Bacillus sphaericus).